The chain runs to 98 residues: Envelope glycoprotein N (98 aa).

The signal sequence occupies residues 1–24 (MVSSAGLSLTLVAALCALVAPALS). Residues 25 to 60 (SIVSTEGPLPLLREESRINFWNAACAARGVPVDQPT) are Virion surface-facing. Residues 61-81 (AAAVTFYICLLAVLVVALGYA) form a helical membrane-spanning segment. Residues 82–98 (TRTCTRMLHASPAGRRV) are Intravirion-facing.

The protein belongs to the herpesviridae glycoprotein N family. In terms of assembly, interacts (via N-terminus) with gM (via N-terminus). The gM-gN heterodimer forms the gCII complex. O-glycosylated.

Its subcellular location is the virion membrane. It is found in the host membrane. The protein localises to the host Golgi apparatus. The protein resides in the host trans-Golgi network. Envelope glycoprotein necessary for proper maturation of gM and modulation of its membrane fusion activity. Also plays a critical role in virion morphogenesis. This is Envelope glycoprotein N from Suid herpesvirus 1 (SuHV-1).